A 196-amino-acid polypeptide reads, in one-letter code: Pyridoxal 5'-phosphate synthase subunit PdxT (196 aa).

56 to 58 (GES) is a binding site for L-glutamine. Cysteine 85 serves as the catalytic Nucleophile. Residues arginine 113 and 141 to 142 (IR) contribute to the L-glutamine site. Active-site charge relay system residues include histidine 177 and glutamate 179.

The protein belongs to the glutaminase PdxT/SNO family. As to quaternary structure, in the presence of PdxS, forms a dodecamer of heterodimers. Only shows activity in the heterodimer.

The catalysed reaction is aldehydo-D-ribose 5-phosphate + D-glyceraldehyde 3-phosphate + L-glutamine = pyridoxal 5'-phosphate + L-glutamate + phosphate + 3 H2O + H(+). It carries out the reaction L-glutamine + H2O = L-glutamate + NH4(+). The protein operates within cofactor biosynthesis; pyridoxal 5'-phosphate biosynthesis. Functionally, catalyzes the hydrolysis of glutamine to glutamate and ammonia as part of the biosynthesis of pyridoxal 5'-phosphate. The resulting ammonia molecule is channeled to the active site of PdxS. The sequence is that of Pyridoxal 5'-phosphate synthase subunit PdxT from Methanospirillum hungatei JF-1 (strain ATCC 27890 / DSM 864 / NBRC 100397 / JF-1).